Reading from the N-terminus, the 629-residue chain is Plastin-1 (629 aa).

At Met-1 the chain carries N-acetylmethionine. EF-hand domains are found at residues 11–46 and 51–86; these read EELE…ASLP and KVRE…LKSK. Asp-24, Asp-26, Ser-28, Tyr-30, Glu-35, Asp-64, Asn-66, Asp-68, Lys-70, and Glu-75 together coordinate Ca(2+). Actin-binding stretches follow at residues 108–380 and 381–625; these read TSTI…CLHK and PNNN…GKGL. Calponin-homology (CH) domains are found at residues 122-238, 266-376, 395-504, and 516-625; these read EEEK…KVGL, LSPE…NTYP, SKEE…RRYT, and KVND…GKGL.

In terms of assembly, monomer. In terms of processing, phosphorylated. As to expression, in small intestine, colon, and kidney; relatively lower levels of expression are detected in the lung and stomach.

The protein localises to the cytoplasm. It localises to the cell projection. It is found in the stereocilium. Functionally, actin-bundling protein. In the inner ear, it is required for stereocilia formation. Mediates liquid packing of actin filaments that is necessary for stereocilia to grow to their proper dimensions. In Homo sapiens (Human), this protein is Plastin-1 (PLS1).